Consider the following 475-residue polypeptide: Coagulation factor X (475 aa).

Residues 1 to 20 (MAGRLLLLLLCAALPDELRA) form the signal peptide. The propeptide occupies 21-40 (EGGVFIKKESADKFLERTKR). In terms of domain architecture, Gla spans 41–85 (ANSFLEEMKQGNIERECNEERCSKEEAREAFEDNEKTEEFWNIYV). A 4-carboxyglutamate mark is found at Glu46, Glu47, Glu54, Glu56, Glu59, Glu60, Glu65, Glu66, Glu69, Glu72, and Glu79. An intrachain disulfide couples Cys57 to Cys62. The 37-residue stretch at 86 to 122 (DGDQCSSNPCHYGGQCKDGLGSYTCSCLDGYQGKNCE) folds into the EGF-like 1; calcium-binding domain. Disulfide bonds link Cys90–Cys101, Cys95–Cys110, Cys112–Cys121, Cys129–Cys140, Cys136–Cys152, Cys154–Cys167, Cys175–Cys348, Cys247–Cys252, Cys267–Cys283, Cys396–Cys410, and Cys421–Cys449. A (3R)-3-hydroxyaspartate modification is found at Asp103. The EGF-like 2 domain maps to 125–168 (IPKYCKINNGDCEQFCSIKKSVQKDVVCSCTSGYELAEDGKQCV). A propeptide spans 186–240 (SVILPTNSNTNATSDQDVPSTNGSILEEVFTTTTESPTPPPRNGSSITDPNVDTR) (activation peptide). Asn196, Asn207, and Asn228 each carry an N-linked (GlcNAc...) asparagine glycan. The tract at residues 216 to 237 (TTTTESPTPPPRNGSSITDPNV) is disordered. The Peptidase S1 domain occupies 241-473 (IVGGDECRPG…FLRWVRTVMR (233 aa)). His282 acts as the Charge relay system in catalysis. Asn285 carries N-linked (GlcNAc...) asparagine glycosylation. Asp328 (charge relay system) is an active-site residue. The active-site Charge relay system is Ser425.

It belongs to the peptidase S1 family. As to quaternary structure, the two chains are formed from a single-chain precursor by the excision of two Arg residues and are held together by 1 or more disulfide bonds. In terms of processing, the vitamin K-dependent, enzymatic carboxylation of some glutamate residues allows the modified protein to bind calcium. Post-translationally, the activation peptide is cleaved by factor IXa (in the intrinsic pathway), or by factor VIIa (in the extrinsic pathway). The iron and 2-oxoglutarate dependent 3-hydroxylation of aspartate and asparagine is (R) stereospecific within EGF domains. As to expression, liver and chorioallantoic membrane.

It localises to the secreted. The catalysed reaction is Selective cleavage of Arg-|-Thr and then Arg-|-Ile bonds in prothrombin to form thrombin.. Functionally, factor Xa is a vitamin K-dependent glycoprotein that converts prothrombin to thrombin in the presence of factor Va, calcium and phospholipid during blood clotting. VAP cleaves the fusion proteins of Sendai virus, NDV, and influenza virus a at a specific single arginine-containing site, and plays a key role in the viral spreading in the allantoic sac. This Gallus gallus (Chicken) protein is Coagulation factor X (F10).